The following is a 476-amino-acid chain: Aspartyl/glutamyl-tRNA(Asn/Gln) amidotransferase subunit B (476 aa).

It belongs to the GatB/GatE family. GatB subfamily. As to quaternary structure, heterotrimer of A, B and C subunits.

It catalyses the reaction L-glutamyl-tRNA(Gln) + L-glutamine + ATP + H2O = L-glutaminyl-tRNA(Gln) + L-glutamate + ADP + phosphate + H(+). It carries out the reaction L-aspartyl-tRNA(Asn) + L-glutamine + ATP + H2O = L-asparaginyl-tRNA(Asn) + L-glutamate + ADP + phosphate + 2 H(+). Functionally, allows the formation of correctly charged Asn-tRNA(Asn) or Gln-tRNA(Gln) through the transamidation of misacylated Asp-tRNA(Asn) or Glu-tRNA(Gln) in organisms which lack either or both of asparaginyl-tRNA or glutaminyl-tRNA synthetases. The reaction takes place in the presence of glutamine and ATP through an activated phospho-Asp-tRNA(Asn) or phospho-Glu-tRNA(Gln). The chain is Aspartyl/glutamyl-tRNA(Asn/Gln) amidotransferase subunit B from Geobacillus thermodenitrificans (strain NG80-2).